Reading from the N-terminus, the 314-residue chain is Vomeronasal type-1 receptor 95 (314 aa).

Residues 1 to 18 (MNKDNTLYCSAYRIAFFS) lie on the Extracellular side of the membrane. A helical membrane pass occupies residues 19-39 (EIGIGISANSCLLLFHTFMFI). At 40–48 (RGHRPRLTD) the chain is on the cytoplasmic side. Residues 49–69 (LPIGLVALIHLVMLLLAAYIT) form a helical membrane-spanning segment. The Extracellular portion of the chain corresponds to 70–88 (EDFFMSSGGWDDITCKLFI). An intrachain disulfide couples Cys84 to Cys171. Residues 89-113 (FLHRFFRSLSVCDTCMLSVFQAIIL) traverse the membrane as a helical segment. At 114–133 (CPQSSHLAKFKLNSPHHLSC) the chain is on the cytoplasmic side. The chain crosses the membrane as a helical span at residues 134–154 (FFIFMSIFYTSISSHILIAAI). Residues 155-186 (ATQNLTSVNLIYITKSCSFLPMSSSMQRTFST) lie on the Extracellular side of the membrane. Asn158 is a glycosylation site (N-linked (GlcNAc...) asparagine). Residues 187–207 (LLAFRNVFLIGLMGLSTCYMA) form a helical membrane-spanning segment. The Cytoplasmic segment spans residues 208 to 235 (TLLCRHKTRSQQLQNSKLSPKATPEQRA). Residues 236–256 (IWTILMLMSFFLIISTFDSIM) form a helical membrane-spanning segment. Topologically, residues 257 to 268 (TYSRTIFQGNQS) are extracellular. Asn266 is a glycosylation site (N-linked (GlcNAc...) asparagine). The chain crosses the membrane as a helical span at residues 269–289 (LYCVQIPVAHGYAAFSPLLVL). Residues 290–314 (NNEKRLTSLMISMYDRIVRLESLCS) are Cytoplasmic-facing.

Belongs to the G-protein coupled receptor 1 family.

The protein resides in the cell membrane. Functionally, putative pheromone receptor implicated in the regulation of social as well as reproductive behavior. This chain is Vomeronasal type-1 receptor 95 (Vom1r95), found in Rattus norvegicus (Rat).